The sequence spans 451 residues: MSTALSPLLAPMLSSAAMRAACDDRSTLQNMLDFEAALARAEAATGVIPAAAVGPIETACKAATFDIAALAEAATRSGNLAIPLVKALTANVAKADAEAARYVHWGATSQDVIDTATMLTLRAAIDALDADLSRAIKGFAALARNHRNTAMVARTWLQHALPMPFGLKAAEYAASLARARCRLRRLSRDGLALQFGGAAGTLAALGDKGLVVAERLAQELNLPLPEAPWHTHRDRIAEAASALAILAGSCGKIARDVSLMMQTDVAEAFEPAGEGRGGSSTMPHKRNPVAAASALGCATMAPQLAATIFAAQVQDHERSAGPWHAEWPTLPQLMLVTSGALAAIVDIAEGLDVDAARMRSNLDATHGLIMAEAVTFALAERIGKSDAHHLIEAASKRAVAEKKHLREVLAADSQVTAHLSPEKIAALFEPMAYQGASQAMIDRLLDSLERD.

It belongs to the class-II fumarase/aspartase family.

It catalyses the reaction 2-(carboxymethyl)-5-oxo-2,5-dihydro-2-furoate = 3-carboxy-cis,cis-muconate + H(+). Catalyzes an anti cycloisomerization. The chain is 3-carboxy-cis,cis-muconate cycloisomerase (pcaB) from Bradyrhizobium diazoefficiens (strain JCM 10833 / BCRC 13528 / IAM 13628 / NBRC 14792 / USDA 110).